The primary structure comprises 560 residues: NAD-dependent malic enzyme (560 aa).

The active-site Proton donor is the Y100. Position 153 (R153) interacts with NAD(+). The active-site Proton acceptor is K171. A divalent metal cation-binding residues include E242, D243, and D266. Positions 266 and 413 each coordinate NAD(+).

The protein belongs to the malic enzymes family. Homotetramer. The cofactor is Mg(2+). Mn(2+) is required as a cofactor.

The enzyme catalyses (S)-malate + NAD(+) = pyruvate + CO2 + NADH. The catalysed reaction is oxaloacetate + H(+) = pyruvate + CO2. In Psychromonas ingrahamii (strain DSM 17664 / CCUG 51855 / 37), this protein is NAD-dependent malic enzyme.